The primary structure comprises 313 residues: MPFSEPGKTKFQVDLRRHLRNQDISDNLVHLICEIAEASKYVINAVRTGDLGVAGTSNLYGEEQLALDVLSDRIIRKRLIHSGVVCNIASEEMDEIFQAQADADGLYSVAYDPLDGSSLVDVNLAVGTIVSIYEGCNLLQKGRNQVAAMYILYGPRVSLVYSVGKGVHEFTMNHLMEYTLSRENVTMKPDGDIYSPGGLRKKYLPETEKFVQHLESKGSKLRYSGGFVPDINQVLMKGKGIFMYPALNGSPNGKLRVLFELNPMAYLIENAGGAATDGKTPILDIEPQSLDQRAPIFIGCSNDVATAMEFMGG.

4 residues coordinate Mg(2+): Glu-91, Asp-112, Leu-114, and Asp-115. Substrate contacts are provided by residues 115–118 (DGSS), Tyr-223, and Lys-254. Mg(2+) is bound at residue Glu-260.

This sequence belongs to the FBPase class 1 family. Homotetramer. Requires Mg(2+) as cofactor.

Its subcellular location is the cytoplasm. It catalyses the reaction beta-D-fructose 1,6-bisphosphate + H2O = beta-D-fructose 6-phosphate + phosphate. It participates in carbohydrate biosynthesis; gluconeogenesis. This chain is Fructose-1,6-bisphosphatase class 1, found in Geobacter sulfurreducens (strain ATCC 51573 / DSM 12127 / PCA).